Consider the following 196-residue polypeptide: Protein GrpE (196 aa).

Residues 1 to 40 are disordered; that stretch reads MSSKEQKTPEGQAPEEIIMDQHEEVEAVEPNDSAEQVDPR.

The protein belongs to the GrpE family. Homodimer.

It is found in the cytoplasm. Functionally, participates actively in the response to hyperosmotic and heat shock by preventing the aggregation of stress-denatured proteins, in association with DnaK and GrpE. It is the nucleotide exchange factor for DnaK and may function as a thermosensor. Unfolded proteins bind initially to DnaJ; upon interaction with the DnaJ-bound protein, DnaK hydrolyzes its bound ATP, resulting in the formation of a stable complex. GrpE releases ADP from DnaK; ATP binding to DnaK triggers the release of the substrate protein, thus completing the reaction cycle. Several rounds of ATP-dependent interactions between DnaJ, DnaK and GrpE are required for fully efficient folding. The sequence is that of Protein GrpE from Salmonella gallinarum (strain 287/91 / NCTC 13346).